Here is a 573-residue protein sequence, read N- to C-terminus: Splicing factor U2af large subunit B (573 aa).

A compositionally biased stretch (acidic residues) spans M1 to D12. Residues M1–L187 form a disordered region. A compositionally biased stretch (basic and acidic residues) spans S38–S145. Residues S161–R173 are compositionally biased toward basic residues. 3 RRM domains span residues R239 to D322, D359 to Q437, and E478 to N564.

The protein belongs to the splicing factor SR family. As to expression, expressed in stems, leaves and apical buds.

Its subcellular location is the nucleus. In terms of biological role, necessary for the splicing of pre-mRNA. Binds to the U -enriched regions of plant introns. This chain is Splicing factor U2af large subunit B (U2AF65B), found in Nicotiana plumbaginifolia (Leadwort-leaved tobacco).